We begin with the raw amino-acid sequence, 263 residues long: tRNA pseudouridine synthase A (263 aa).

Residue D54 is the Nucleophile of the active site. Y113 provides a ligand contact to substrate.

It belongs to the tRNA pseudouridine synthase TruA family. As to quaternary structure, homodimer.

The enzyme catalyses uridine(38/39/40) in tRNA = pseudouridine(38/39/40) in tRNA. Its function is as follows. Formation of pseudouridine at positions 38, 39 and 40 in the anticodon stem and loop of transfer RNAs. The sequence is that of tRNA pseudouridine synthase A from Lactobacillus helveticus (strain DPC 4571).